A 507-amino-acid chain; its full sequence is ATP synthase subunit alpha, chloroplastic (507 aa).

170-177 (GDRQTGKT) serves as a coordination point for ATP.

This sequence belongs to the ATPase alpha/beta chains family. F-type ATPases have 2 components, CF(1) - the catalytic core - and CF(0) - the membrane proton channel. CF(1) has five subunits: alpha(3), beta(3), gamma(1), delta(1), epsilon(1). CF(0) has four main subunits: a, b, b' and c.

It localises to the plastid. Its subcellular location is the chloroplast thylakoid membrane. It carries out the reaction ATP + H2O + 4 H(+)(in) = ADP + phosphate + 5 H(+)(out). Produces ATP from ADP in the presence of a proton gradient across the membrane. The alpha chain is a regulatory subunit. The sequence is that of ATP synthase subunit alpha, chloroplastic from Atropa belladonna (Belladonna).